A 222-amino-acid polypeptide reads, in one-letter code: MLWLLFFLVTAIHAELCQPGAENAFKVRLSIRTALGDKAYAWDTNEEYLFKAMVAFSMRKVPNREATEISHVLLCNVTQRVSFWFVVTDPSKNHTLPAVEVQSAIRMNKNRINNAFFLNDQTLEFLKIPSTLAPPMDPSVPIWIIIFGVIFCIIIVAIALLILSGIWQRRRKNKEPSEVDDAEDKCENMITIENGIPSDPLDMKGGHINDAFMTEDERLTPL.

Positions 1 to 14 are cleaved as a signal peptide; that stretch reads MLWLLFFLVTAIHA. Residues 15-141 are Extracellular-facing; it reads ELCQPGAENA…LAPPMDPSVP (127 aa). One can recognise a Collectrin-like domain in the interval 21–222; the sequence is AENAFKVRLS…MTEDERLTPL (202 aa). Residues N76 and N93 are each glycosylated (N-linked (GlcNAc...) asparagine). The helical transmembrane segment at 142 to 162 threads the bilayer; that stretch reads IWIIIFGVIFCIIIVAIALLI. Over 163-222 the chain is Cytoplasmic; it reads LSGIWQRRRKNKEPSEVDDAEDKCENMITIENGIPSDPLDMKGGHINDAFMTEDERLTPL. Phosphothreonine is present on residues T214 and T220.

Belongs to the CLTRN family. As to quaternary structure, monomer. Homodimer; dimerization prevents CLTRN cleavage by BACE2. Interacts with SLC6A18; this interaction regulates the trafficking of SLC6A18 to the cell membrane and its amino acid transporter activity. Interacts with SLC6A19; this interaction regulates the trafficking of SLC6A19 to the cell membrane and its amino acid transporter activity. Interacts with SNAPIN. Post-translationally, glycosylated. Glycosylation is required for plasma membrane localization and for its cleavage by BACE2. In terms of processing, proteolytically processed in pancreatic beta cells by BACE2 leading to the generation and extracellular release of soluble CLTRN, and a corresponding cell-associated C-terminal fragment which is later cleaved by gamma-secretase. This shedding process inactivates CLTRN. Three cleavage sites have been identified for BACE2, two clustered sites after Phe-116 and Leu-118 and a more membrane proximal site at Phe-125; the preferred BACE2 cleavage site seems to be between Phe-125 and Leu-126, Phe-116 and Leu-118 act as alternative sites. Kidney; collecting ducts. Pancreas; beta cells of islets.

It is found in the cell membrane. In terms of biological role, plays an important role in amino acid transport by acting as binding partner of amino acid transporters SLC6A18 and SLC6A19, regulating their trafficking on the cell surface and their amino acid transporter activity. May also play a role in trafficking of amino acid transporters SLC3A1 and SLC7A9 to the renal cortical cell membrane. Regulator of SNARE complex function. Stimulator of beta cell replication. This is Collectrin from Homo sapiens (Human).